We begin with the raw amino-acid sequence, 164 residues long: Large ribosomal subunit protein uL10 (164 aa).

This sequence belongs to the universal ribosomal protein uL10 family. In terms of assembly, part of the ribosomal stalk of the 50S ribosomal subunit. The N-terminus interacts with L11 and the large rRNA to form the base of the stalk. The C-terminus forms an elongated spine to which L12 dimers bind in a sequential fashion forming a multimeric L10(L12)X complex.

Forms part of the ribosomal stalk, playing a central role in the interaction of the ribosome with GTP-bound translation factors. This is Large ribosomal subunit protein uL10 from Aliivibrio salmonicida (strain LFI1238) (Vibrio salmonicida (strain LFI1238)).